The following is a 272-amino-acid chain: Phosphate import ATP-binding protein PstB (272 aa).

The ABC transporter domain occupies 26–267 (IVVKNWNLYY…PQVKRTEDYI (242 aa)). 58 to 65 (GPSGCGKS) contributes to the ATP binding site.

This sequence belongs to the ABC transporter superfamily. Phosphate importer (TC 3.A.1.7) family. The complex is composed of two ATP-binding proteins (PstB), two transmembrane proteins (PstC and PstA) and a solute-binding protein (PstS).

It is found in the cell inner membrane. It carries out the reaction phosphate(out) + ATP + H2O = ADP + 2 phosphate(in) + H(+). Functionally, part of the ABC transporter complex PstSACB involved in phosphate import. Responsible for energy coupling to the transport system. This is Phosphate import ATP-binding protein PstB from Hydrogenovibrio crunogenus (strain DSM 25203 / XCL-2) (Thiomicrospira crunogena).